A 90-amino-acid chain; its full sequence is Large ribosomal subunit protein bL31B-1 (90 aa).

This sequence belongs to the bacterial ribosomal protein bL31 family. Type B subfamily. Part of the 50S ribosomal subunit.

This Streptomyces coelicolor (strain ATCC BAA-471 / A3(2) / M145) protein is Large ribosomal subunit protein bL31B-1.